The primary structure comprises 1088 residues: RNA-directed RNA polymerase (1088 aa).

Residues 501-687 (LSYGDVTRFL…AKRYIAGGKI (187 aa)) enclose the RdRp catalytic domain.

Belongs to the reoviridae RNA-directed RNA polymerase family. Interacts with VP3 (Potential). Interacts with VP2; this interaction activates VP1. Interacts with NSP5; this interaction is probably necessary for the formation of functional virus factories. Interacts with NSP2; this interaction is weak. Mg(2+) is required as a cofactor.

It localises to the virion. It carries out the reaction RNA(n) + a ribonucleoside 5'-triphosphate = RNA(n+1) + diphosphate. RNA-directed RNA polymerase that is involved in both transcription and genome replication. Together with VP3 capping enzyme, forms an enzyme complex positioned near the channels situated at each of the five-fold vertices of the core. Following infection, the outermost layer of the virus is lost, leaving a double-layered particle (DLP) made up of the core and VP6 shell. VP1 then catalyzes the transcription of fully conservative plus-strand genomic RNAs that are extruded through the DLP's channels into the cytoplasm where they function as mRNAs for translation of viral proteins. One copy of each of the viral (+)RNAs is also recruited during core assembly, together with newly synthesized polymerase complexes and VP2. The polymerase of these novo-formed particles catalyzes the synthesis of complementary minus-strands leading to dsRNA formation. To do so, the polymerase specifically recognizes and binds 4 bases 5'-UGUG-3' in the conserved 3'-sequence of plus-strand RNA templates. VP2 presumably activates the autoinhibited VP1-RNA complex to coordinate packaging and genome replication. Once dsRNA synthesis is complete, the polymerase switches to the transcriptional mode, thus providing secondary transcription. This is RNA-directed RNA polymerase from Rotavirus A (strain RVA/SA11-Both/G3P5B[2]) (RV-A).